A 555-amino-acid polypeptide reads, in one-letter code: Formate--tetrahydrofolate ligase (555 aa).

64-71 (TPAGEGKT) lines the ATP pocket.

This sequence belongs to the formate--tetrahydrofolate ligase family.

The catalysed reaction is (6S)-5,6,7,8-tetrahydrofolate + formate + ATP = (6R)-10-formyltetrahydrofolate + ADP + phosphate. It functions in the pathway one-carbon metabolism; tetrahydrofolate interconversion. This is Formate--tetrahydrofolate ligase from Dinoroseobacter shibae (strain DSM 16493 / NCIMB 14021 / DFL 12).